The primary structure comprises 213 residues: Pyridoxine/pyridoxamine 5'-phosphate oxidase (213 aa).

Residues 8 to 11 and Lys67 each bind substrate; that span reads RREY. Residues 62-67, 77-78, Arg83, Lys84, and Gln106 contribute to the FMN site; these read RIVLLK and FT. The substrate site is built by Tyr124, Arg128, and Ser132. FMN is bound by residues 141 to 142 and Trp186; that span reads QS. 192 to 194 lines the substrate pocket; that stretch reads RLH. Arg196 contacts FMN.

It belongs to the pyridoxamine 5'-phosphate oxidase family. In terms of assembly, homodimer. FMN is required as a cofactor.

It carries out the reaction pyridoxamine 5'-phosphate + O2 + H2O = pyridoxal 5'-phosphate + H2O2 + NH4(+). The enzyme catalyses pyridoxine 5'-phosphate + O2 = pyridoxal 5'-phosphate + H2O2. It participates in cofactor metabolism; pyridoxal 5'-phosphate salvage; pyridoxal 5'-phosphate from pyridoxamine 5'-phosphate: step 1/1. Its pathway is cofactor metabolism; pyridoxal 5'-phosphate salvage; pyridoxal 5'-phosphate from pyridoxine 5'-phosphate: step 1/1. Its function is as follows. Catalyzes the oxidation of either pyridoxine 5'-phosphate (PNP) or pyridoxamine 5'-phosphate (PMP) into pyridoxal 5'-phosphate (PLP). The protein is Pyridoxine/pyridoxamine 5'-phosphate oxidase of Shewanella sediminis (strain HAW-EB3).